The following is a 436-amino-acid chain: Trigger factor (436 aa).

One can recognise a PPIase FKBP-type domain in the interval 163 to 248 (GDRVVLDFAG…VKEVAEGVLP (86 aa)).

This sequence belongs to the FKBP-type PPIase family. Tig subfamily.

Its subcellular location is the cytoplasm. The enzyme catalyses [protein]-peptidylproline (omega=180) = [protein]-peptidylproline (omega=0). Its function is as follows. Involved in protein export. Acts as a chaperone by maintaining the newly synthesized protein in an open conformation. Functions as a peptidyl-prolyl cis-trans isomerase. The protein is Trigger factor of Bordetella bronchiseptica (strain ATCC BAA-588 / NCTC 13252 / RB50) (Alcaligenes bronchisepticus).